Consider the following 509-residue polypeptide: H/ACA ribonucleoprotein complex subunit DKC1 (509 aa).

The disordered stretch occupies residues 1 to 24 (MADAEVITFPKKHKKKKDRKPLQE). A2 is modified (N-acetylalanine). A nucleolar localization region spans residues 2–21 (ADAEVITFPKKHKKKKDRKP). The segment covering 10–19 (PKKHKKKKDR) has biased composition (basic residues). Glycyl lysine isopeptide (Lys-Gly) (interchain with G-Cter in SUMO2) cross-links involve residues K20, K39, and K43. The Nucleophile role is filled by D125. Residue K191 forms a Glycyl lysine isopeptide (Lys-Gly) (interchain with G-Cter in SUMO2) linkage. Residues 297–372 (KRLVMKDSAV…VAKIKRVIME (76 aa)) enclose the PUA domain. S387 carries the post-translational modification Phosphoserine. K394 is covalently cross-linked (Glycyl lysine isopeptide (Lys-Gly) (interchain with G-Cter in SUMO2)). Residue K413 forms a Glycyl lysine isopeptide (Lys-Gly) (interchain with G-Cter in SUMO1); alternate linkage. A Glycyl lysine isopeptide (Lys-Gly) (interchain with G-Cter in SUMO2); alternate cross-link involves residue K413. K424 participates in a covalent cross-link: Glycyl lysine isopeptide (Lys-Gly) (interchain with G-Cter in SUMO2). Positions 446–509 (KRKRDSESES…KVKVVEEMSE (64 aa)) are nuclear and nucleolar localization. A disordered region spans residues 447-509 (RKRDSESESD…KVKVVEEMSE (63 aa)). Phosphoserine is present on residues S451, S453, and S455. Position 458 is a phosphothreonine (T458). Over residues 466–476 (EKKKKKDKKPK) the composition is skewed to basic residues. At S481 the chain carries Phosphoserine. At T485 the chain carries Phosphothreonine. The residue at position 508 (S508) is a Phosphoserine.

The protein belongs to the pseudouridine synthase TruB family. As to quaternary structure, part of the H/ACA small nucleolar ribonucleoprotein (H/ACA snoRNP) complex, which contains NHP2/NOLA2, GAR1/NOLA1, NOP10/NOLA3, and DKC1/NOLA4, which is presumed to be the catalytic subunit. The complex contains a stable core formed by binding of one or two NOP10-DKC1 heterodimers to NHP2; GAR1 subsequently binds to this core via DKC1. The complex binds a box H/ACA small nucleolar RNA (snoRNA), which may target the specific site of modification within the RNA substrate. During assembly, the complex contains NAF1 instead of GAR1/NOLA1. The complex also interacts with TERC, which contains a 3'-terminal domain related to the box H/ACA snoRNAs. Specific interactions with snoRNAs or TERC are mediated by GAR1 and NHP2. Associates with NOLC1/NOPP140. H/ACA snoRNPs interact with the SMN complex, consisting of SMN1 or SMN2, GEMIN2/SIP1, DDX20/GEMIN3, and GEMIN4. This is mediated by interaction between GAR1 and SMN1 or SMN2. The SMN complex may be required for correct assembly of the H/ACA snoRNP complex. Component of the telomerase holoenzyme complex composed of one molecule of TERT, one molecule of WRAP53/TCAB1, two molecules of H/ACA ribonucleoprotein complex subunits DKC1, NOP10, NHP2 and GAR1, and a telomerase RNA template component (TERC). The telomerase holoenzyme complex is associated with TEP1, SMG6/EST1A and POT1. Interacts with SHQ1; this interaction may lead to the stabilization of DKC1, from the time of its synthesis until its association with NOP10, NHP2, and NAF1 at the nascent H/ACA RNA. Interacts with HMBOX1. Interacts with DHX36. As to expression, ubiquitously expressed, with elevated levels in Purkinje cells, the olfactory bulb, and Leydig cells of the testis.

The protein localises to the nucleus. It localises to the nucleolus. Its subcellular location is the cajal body. It carries out the reaction uridine in 5S rRNA = pseudouridine in 5S rRNA. Catalytic subunit of H/ACA small nucleolar ribonucleoprotein (H/ACA snoRNP) complex, which catalyzes pseudouridylation of rRNA. This involves the isomerization of uridine such that the ribose is subsequently attached to C5, instead of the normal N1. Each rRNA can contain up to 100 pseudouridine ('psi') residues, which may serve to stabilize the conformation of rRNAs. Required for ribosome biogenesis and telomere maintenance. Also required for correct processing or intranuclear trafficking of TERC, the RNA component of the telomerase reverse transcriptase (TERT) holoenzyme. This Mus musculus (Mouse) protein is H/ACA ribonucleoprotein complex subunit DKC1 (Dkc1).